Reading from the N-terminus, the 206-residue chain is MAVGEVMRMEIPAGGDLTVTTPELHVLAVDDSIVDRKVIERLLRISSCKVTTVESGTRALQYLGLDGGKGASNLKDLKVNLIVTDYSMPGLSGYDLLKKIKESSAFREVPVVIMSSENILPRIQECLKEGAEEFLLKPVKLADVKRIKQLIMRNEAEECKILSHSNKRKLQEDSDTSSSSHDDTSIKDSSCSKRMKSESENLFSLL.

The 128-residue stretch at 25–152 (HVLAVDDSIV…DVKRIKQLIM (128 aa)) folds into the Response regulatory domain. Position 85 is a 4-aspartylphosphate (Asp-85). The tract at residues 165–206 (SNKRKLQEDSDTSSSSHDDTSIKDSSCSKRMKSESENLFSLL) is disordered.

Belongs to the ARR family. Type-A subfamily. Post-translationally, two-component system major event consists of a His-to-Asp phosphorelay between a sensor histidine kinase (HK) and a response regulator (RR). In plants, the His-to-Asp phosphorelay involves an additional intermediate named Histidine-containing phosphotransfer protein (HPt). This multistep phosphorelay consists of a His-Asp-His-Asp sequential transfer of a phosphate group between first a His and an Asp of the HK protein, followed by the transfer to a conserved His of the HPt protein and finally the transfer to an Asp in the receiver domain of the RR protein. In terms of tissue distribution, predominantly expressed in roots and young flowers.

It localises to the nucleus. Functions as a response regulator involved in His-to-Asp phosphorelay signal transduction system. Phosphorylation of the Asp residue in the receiver domain activates the ability of the protein to promote the transcription of target genes. Type-A response regulators seem to act as negative regulators of the cytokinin signaling. In Arabidopsis thaliana (Mouse-ear cress), this protein is Two-component response regulator ARR7 (ARR7).